The primary structure comprises 160 residues: Baculoviral IAP repeat-containing protein 5.1-A (160 aa).

A BIR repeat occupies 27–97 (RLATFADWPF…KRSANCGFLS (71 aa)). Thr43 carries the post-translational modification Phosphothreonine; by CDK1. Positions 66, 69, 86, and 93 each coordinate Zn(2+).

This sequence belongs to the IAP family. In terms of assembly, component of the CPC at least composed of survivin/birc5, incenp, cdca8/borealin and/or cdca9/dasra-A, and aurkb/aurora-B. Interacts directly with incenp (via N-terminus), and may weakly interact with aurkb (via N-terminus) to stabilize the complex. Interacts with GTP-bound ran in both the S and M phases of the cell cycle. Also found in a complex with ubiquitin-mediated signaling proteins including at least usp9x/xFAM, nploc4/npl4 and ufd1. Ubiquitination is required for centrosome-targeting.

The protein localises to the cytoplasm. The protein resides in the nucleus. Its subcellular location is the chromosome. It localises to the centromere. It is found in the cytoskeleton. The protein localises to the spindle. In terms of biological role, component of the chromosomal passenger complex (CPC), a complex that acts as a key regulator of mitosis. The CPC complex has essential functions at the centromere in ensuring correct chromosome alignment and segregation and is required for chromatin-induced microtubule stabilization and spindle assembly. Stimulates the mitotic kinase activity of aurkb/aurora-B in the CPC. Does not appear to exhibit anti-apoptotic activity. This Xenopus laevis (African clawed frog) protein is Baculoviral IAP repeat-containing protein 5.1-A (birc5.1-a).